We begin with the raw amino-acid sequence, 354 residues long: Trans-3-hydroxy-L-proline dehydratase (354 aa).

Residue C104 is the Proton acceptor of the active site. Residues 105 to 106 (GH), D269, and 274 to 275 (GS) each bind substrate.

It belongs to the proline racemase family. As to quaternary structure, homodimer. As to expression, ubiquitously expressed.

It catalyses the reaction trans-3-hydroxy-L-proline = 1-pyrroline-2-carboxylate + H2O. Functionally, catalyzes the dehydration of trans-3-hydroxy-L-proline to Delta(1)-pyrroline-2-carboxylate (Pyr2C). May be required to degrade trans-3-hydroxy-L-proline from the diet and originating from the degradation of proteins such as collagen-IV that contain it. The chain is Trans-3-hydroxy-L-proline dehydratase (L3HYPDH) from Homo sapiens (Human).